The following is a 482-amino-acid chain: MGSNPTPSASVLYMDLSFILKRVKGITLNSKEVKKGYLFFAIKGTRFDGHNFIREAEERGAYAVVVERPVSSKVPVIIVEDTRKALGKSAHEFFGKPSERLNVIGITGTNGKTTTTHLIEKILLEAGEKTGLIGTIYYRLGEKILGSGRTTPDQITWHRTLKEFYELGAKNVVAEISSHALDQYRVYPTRFEAVLFTNLSQDHLDYHKTMEDYFASKAKLFTEYESKVKIINADDTYGKRLLKITHGEIITYGKKGDLKILNFRTDFRGSALRIAFKGKEYEFSTNLIGDFQAYNLSAAIAYALWKGIEPDLIQRALKCVNVPGRFEVVHSDKFTVIIDYAHTPDAVENVLRTARKLSKGKLISVFGAGGNRDREKRPLMGKAAEKYSDLIILTSDNPRDEEPEKIIEDILDGISEKDKVIIEADRRKAIKKAIDMAKEGDMVAILGKGHEDYQEIKGVKYPFSDAQVVKEILGGDGCIGKD.

Residues L28 and S30 each contribute to the UDP-N-acetyl-alpha-D-muramoyl-L-alanyl-D-glutamate site. Position 108–114 (G108–T114) interacts with ATP. UDP-N-acetyl-alpha-D-muramoyl-L-alanyl-D-glutamate contacts are provided by residues T150–T151, S177, Q183, and R185. Residue K217 is modified to N6-carboxylysine. Meso-2,6-diaminopimelate contacts are provided by residues R372, D396 to R399, G447, and E451. Residues D396–R399 carry the Meso-diaminopimelate recognition motif motif.

It belongs to the MurCDEF family. MurE subfamily. Mg(2+) is required as a cofactor. Post-translationally, carboxylation is probably crucial for Mg(2+) binding and, consequently, for the gamma-phosphate positioning of ATP.

It localises to the cytoplasm. The catalysed reaction is UDP-N-acetyl-alpha-D-muramoyl-L-alanyl-D-glutamate + meso-2,6-diaminopimelate + ATP = UDP-N-acetyl-alpha-D-muramoyl-L-alanyl-gamma-D-glutamyl-meso-2,6-diaminopimelate + ADP + phosphate + H(+). Its pathway is cell wall biogenesis; peptidoglycan biosynthesis. Functionally, catalyzes the addition of meso-diaminopimelic acid to the nucleotide precursor UDP-N-acetylmuramoyl-L-alanyl-D-glutamate (UMAG) in the biosynthesis of bacterial cell-wall peptidoglycan. The protein is UDP-N-acetylmuramoyl-L-alanyl-D-glutamate--2,6-diaminopimelate ligase of Aquifex aeolicus (strain VF5).